Here is a 70-residue protein sequence, read N- to C-terminus: Envelope small membrane protein (70 aa).

Residue Gly-2 is the site of N-myristoyl glycine; by host attachment. The segment at 2–15 (GSLWSKISQLFVDA) is endoplasmic reticulum retention signal. The Virion surface segment spans residues 2 to 25 (GSLWSKISQLFVDAFTEFLVSVVD). Residues 26 to 46 (IAIFLAILFGFTVAGWLLVFL) traverse the membrane as a helical segment. At 47-70 (LRVVCSALLRSRSAIHSPELSKVL) the chain is on the intravirion side.

Belongs to the arteriviridae E protein family. As to quaternary structure, homooligomer. Associates with itself into higher-order structures, including dimers, trimers and tetramers. Associates with the GP2a-GP3-GP4 complex. Post-translationally, myristoylated. Not glycosylated.

Its subcellular location is the virion membrane. The protein localises to the host endoplasmic reticulum membrane. It is found in the host Golgi apparatus membrane. It localises to the secreted. Its function is as follows. Minor envelope protein. May function as a viroporin in the virion envelope that facilitates uncoating of the virus in order to release the genomic RNA into the cytoplasm for subsequent replication. This is Envelope small membrane protein (GP2b) from Sus scrofa (Pig).